A 352-amino-acid chain; its full sequence is Peptide chain release factor 1 (352 aa).

N5-methylglutamine is present on glutamine 233. Residues 288-309 (NAKDRKEQVGSGDRSERIRTYN) form a disordered region. Residues 289–306 (AKDRKEQVGSGDRSERIR) show a composition bias toward basic and acidic residues.

Belongs to the prokaryotic/mitochondrial release factor family. Methylated by PrmC. Methylation increases the termination efficiency of RF1.

It is found in the cytoplasm. Its function is as follows. Peptide chain release factor 1 directs the termination of translation in response to the peptide chain termination codons UAG and UAA. This chain is Peptide chain release factor 1, found in Helicobacter acinonychis (strain Sheeba).